A 254-amino-acid polypeptide reads, in one-letter code: Coiled-coil domain-containing protein 152 (254 aa).

Residues 61 to 246 (SIKEECATLH…LEQRLSVGKD (186 aa)) adopt a coiled-coil conformation.

Detected in stomach.

In Homo sapiens (Human), this protein is Coiled-coil domain-containing protein 152 (CCDC152).